The following is a 217-amino-acid chain: 3,4-dihydroxy-2-butanone 4-phosphate synthase (217 aa).

Residues 37-38 (RE), D42, 150-154 (RRGHT), and E174 contribute to the D-ribulose 5-phosphate site. E38 serves as a coordination point for Mg(2+). H153 provides a ligand contact to Mg(2+).

This sequence belongs to the DHBP synthase family. In terms of assembly, homodimer. It depends on Mg(2+) as a cofactor. Mn(2+) serves as cofactor.

It carries out the reaction D-ribulose 5-phosphate = (2S)-2-hydroxy-3-oxobutyl phosphate + formate + H(+). It functions in the pathway cofactor biosynthesis; riboflavin biosynthesis; 2-hydroxy-3-oxobutyl phosphate from D-ribulose 5-phosphate: step 1/1. Functionally, catalyzes the conversion of D-ribulose 5-phosphate to formate and 3,4-dihydroxy-2-butanone 4-phosphate. This chain is 3,4-dihydroxy-2-butanone 4-phosphate synthase, found in Yersinia pseudotuberculosis serotype O:1b (strain IP 31758).